Here is a 61-residue protein sequence, read N- to C-terminus: N-acetyl-D-glucosamine kinase (61 aa).

A Phosphotyrosine modification is found at tyrosine 30. Residue serine 45 coordinates ATP.

Belongs to the eukaryotic-type N-acetylglucosamine kinase family. Homodimer.

The enzyme catalyses N-acetyl-D-glucosamine + ATP = N-acetyl-D-glucosamine 6-phosphate + ADP + H(+). The catalysed reaction is aldehydo-N-acetyl-D-mannosamine + ATP = aldehydo-N-acetyl-D-mannosamine 6-phosphate + ADP + H(+). It catalyses the reaction N-acetyl-D-muramoyl-L-alanyl-D-isoglutamine + ATP = 6-O-phospho-N-acetyl-D-muramoyl-L-alanyl-D-isoglutamine + ADP + H(+). Its pathway is amino-sugar metabolism; N-acetylneuraminate degradation. Converts endogenous N-acetylglucosamine (GlcNAc), a major component of complex carbohydrates, from lysosomal degradation or nutritional sources into GlcNAc 6-phosphate. Also has N-acetylmannosamine (ManNAc) kinase activity. Involved in the N-glycolylneuraminic acid (Neu5Gc) degradation pathway. Also involved in innate immunity by promoting detection of bacterial peptidoglycan by NOD2: acts by catalyzing phosphorylation of muramyl dipeptide (MDP), a fragment of bacterial peptidoglycan, to generate 6-O-phospho-muramyl dipeptide, which acts as a direct ligand for NOD2. In Mesocricetus auratus (Golden hamster), this protein is N-acetyl-D-glucosamine kinase.